The following is a 307-amino-acid chain: 4-hydroxy-tetrahydrodipicolinate synthase (307 aa).

Thr57 provides a ligand contact to pyruvate. The active-site Proton donor/acceptor is the Tyr145. Lys173 serves as the catalytic Schiff-base intermediate with substrate. Val215 is a binding site for pyruvate.

The protein belongs to the DapA family. In terms of assembly, homotetramer; dimer of dimers.

It localises to the cytoplasm. The enzyme catalyses L-aspartate 4-semialdehyde + pyruvate = (2S,4S)-4-hydroxy-2,3,4,5-tetrahydrodipicolinate + H2O + H(+). It functions in the pathway amino-acid biosynthesis; L-lysine biosynthesis via DAP pathway; (S)-tetrahydrodipicolinate from L-aspartate: step 3/4. Functionally, catalyzes the condensation of (S)-aspartate-beta-semialdehyde [(S)-ASA] and pyruvate to 4-hydroxy-tetrahydrodipicolinate (HTPA). This is 4-hydroxy-tetrahydrodipicolinate synthase from Leptospira interrogans serogroup Icterohaemorrhagiae serovar copenhageni (strain Fiocruz L1-130).